A 20-amino-acid polypeptide reads, in one-letter code: Collagenolytic protease 36 kDa C (20 aa).

The 20-residue stretch at 1–20 (IVGGSEATSGQFPYQXSFQD) folds into the Peptidase S1 domain. The disordered stretch occupies residues 1-20 (IVGGSEATSGQFPYQXSFQD).

Belongs to the peptidase S1 family.

It carries out the reaction Hydrolysis of proteins, with broad specificity for peptide bonds. Native collagen is cleaved about 75% of the length of the molecule from the N-terminus. Low activity on small molecule substrates of both trypsin and chymotrypsin.. In terms of biological role, this enzyme is a serine protease capable of degrading the native triple helix of collagen. In Paralithodes camtschaticus (Red king crab), this protein is Collagenolytic protease 36 kDa C.